We begin with the raw amino-acid sequence, 477 residues long: Probable periplasmic serine endoprotease DegP-like (477 aa).

Positions 1–27 (MSIPRLKSYLTMFAAVLMLGQVLTAQA) are cleaved as a signal peptide. Residues histidine 117, aspartate 147, and serine 220 each act as charge relay system in the active site. Substrate-binding positions include 218-220 (GNS) and 275-279 (LGVVI). 2 PDZ domains span residues 264-355 (LKKD…IRNG) and 361-466 (DISV…LRQG).

Belongs to the peptidase S1C family.

It localises to the periplasm. It catalyses the reaction Acts on substrates that are at least partially unfolded. The cleavage site P1 residue is normally between a pair of hydrophobic residues, such as Val-|-Val.. In terms of biological role, might be efficient in the degradation of transiently denatured and unfolded proteins which accumulate in the periplasm following stress conditions. This chain is Probable periplasmic serine endoprotease DegP-like, found in Pseudomonas putida (strain GB-1).